We begin with the raw amino-acid sequence, 540 residues long: CTP synthase (540 aa).

Residues 1–273 are amidoligase domain; it reads MNNKDLKTKF…DDFILQHFKL (273 aa). Ser19 serves as a coordination point for CTP. Ser19 lines the UTP pocket. 20–25 lines the ATP pocket; it reads SLGKGI. Tyr60 contributes to the L-glutamine binding site. Asp77 serves as a coordination point for ATP. Mg(2+) is bound by residues Asp77 and Glu147. CTP is bound by residues 154–156, 194–199, and Lys230; these read DIE and KTKPTQ. Residues 194-199 and Lys230 contribute to the UTP site; that span reads KTKPTQ. Residues 306-539 enclose the Glutamine amidotransferase type-1 domain; that stretch reads YIVLHDAYLS…VEASLLNQKN (234 aa). Gly361 contributes to the L-glutamine binding site. The active-site Nucleophile; for glutamine hydrolysis is Cys388. Residues 389–392, Glu412, and Arg466 contribute to the L-glutamine site; that span reads LGMQ. Catalysis depends on residues His512 and Glu514.

It belongs to the CTP synthase family. As to quaternary structure, homotetramer.

The catalysed reaction is UTP + L-glutamine + ATP + H2O = CTP + L-glutamate + ADP + phosphate + 2 H(+). It catalyses the reaction L-glutamine + H2O = L-glutamate + NH4(+). The enzyme catalyses UTP + NH4(+) + ATP = CTP + ADP + phosphate + 2 H(+). It functions in the pathway pyrimidine metabolism; CTP biosynthesis via de novo pathway; CTP from UDP: step 2/2. Its activity is regulated as follows. Allosterically activated by GTP, when glutamine is the substrate; GTP has no effect on the reaction when ammonia is the substrate. The allosteric effector GTP functions by stabilizing the protein conformation that binds the tetrahedral intermediate(s) formed during glutamine hydrolysis. Inhibited by the product CTP, via allosteric rather than competitive inhibition. Its function is as follows. Catalyzes the ATP-dependent amination of UTP to CTP with either L-glutamine or ammonia as the source of nitrogen. Regulates intracellular CTP levels through interactions with the four ribonucleotide triphosphates. The chain is CTP synthase from Onion yellows phytoplasma (strain OY-M).